A 107-amino-acid chain; its full sequence is Thiosulfate sulfurtransferase GlpE (107 aa).

Residues Q19–K107 enclose the Rhodanese domain. Residue C67 is the Cysteine persulfide intermediate of the active site.

Belongs to the GlpE family.

It is found in the cytoplasm. It carries out the reaction thiosulfate + hydrogen cyanide = thiocyanate + sulfite + 2 H(+). The enzyme catalyses thiosulfate + [thioredoxin]-dithiol = [thioredoxin]-disulfide + hydrogen sulfide + sulfite + 2 H(+). Transferase that catalyzes the transfer of sulfur from thiosulfate to thiophilic acceptors such as cyanide or dithiols. May function in a CysM-independent thiosulfate assimilation pathway by catalyzing the conversion of thiosulfate to sulfite, which can then be used for L-cysteine biosynthesis. This is Thiosulfate sulfurtransferase GlpE from Aliivibrio fischeri (strain MJ11) (Vibrio fischeri).